Reading from the N-terminus, the 234-residue chain is Leucyl/phenylalanyl-tRNA--protein transferase (234 aa).

It belongs to the L/F-transferase family.

It localises to the cytoplasm. The enzyme catalyses N-terminal L-lysyl-[protein] + L-leucyl-tRNA(Leu) = N-terminal L-leucyl-L-lysyl-[protein] + tRNA(Leu) + H(+). The catalysed reaction is N-terminal L-arginyl-[protein] + L-leucyl-tRNA(Leu) = N-terminal L-leucyl-L-arginyl-[protein] + tRNA(Leu) + H(+). It carries out the reaction L-phenylalanyl-tRNA(Phe) + an N-terminal L-alpha-aminoacyl-[protein] = an N-terminal L-phenylalanyl-L-alpha-aminoacyl-[protein] + tRNA(Phe). In terms of biological role, functions in the N-end rule pathway of protein degradation where it conjugates Leu, Phe and, less efficiently, Met from aminoacyl-tRNAs to the N-termini of proteins containing an N-terminal arginine or lysine. This is Leucyl/phenylalanyl-tRNA--protein transferase from Escherichia coli O45:K1 (strain S88 / ExPEC).